The following is a 457-amino-acid chain: Na(+)/H(+) antiporter NhaA (457 aa).

The next 11 membrane-spanning stretches (helical) occupy residues 33 to 53 (ASGI…NSPL), 76 to 96 (FSLA…VVGM), 114 to 134 (LLPL…FLAF), 142 to 162 (AGWG…LTLL), 172 to 192 (VFVT…IALF), 196 to 216 (GLQL…ALMS), 235 to 255 (YALH…GLAI), 308 to 328 (FVHA…ALAN), 349 to 369 (TALA…WIAV), 385 to 405 (LIGV…IAGL), and 419 to 439 (VGIL…LRLT).

This sequence belongs to the NhaA Na(+)/H(+) (TC 2.A.33) antiporter family.

The protein resides in the cell inner membrane. The enzyme catalyses Na(+)(in) + 2 H(+)(out) = Na(+)(out) + 2 H(+)(in). In terms of biological role, na(+)/H(+) antiporter that extrudes sodium in exchange for external protons. This chain is Na(+)/H(+) antiporter NhaA, found in Anaeromyxobacter sp. (strain Fw109-5).